A 203-amino-acid polypeptide reads, in one-letter code: Endo-type membrane-bound lytic murein transglycosylase A (203 aa).

A signal peptide spans 1–15 (MKLRWFAFLIVLLAG). Residue Cys-16 is the site of N-palmitoyl cysteine attachment. Residue Cys-16 is the site of S-diacylglycerol cysteine attachment.

Belongs to the transglycosylase Slt family.

It is found in the cell outer membrane. The catalysed reaction is Endolytic cleavage of the (1-&gt;4)-beta-glycosidic linkage between N-acetylmuramic acid (MurNAc) and N-acetylglucosamine (GlcNAc) residues in peptidoglycan with concomitant formation of a 1,6-anhydrobond in the MurNAc residue.. Functionally, murein-degrading enzyme. May play a role in recycling of muropeptides during cell elongation and/or cell division. Preferentially cleaves at a distance of more than two disaccharide units from the ends of the glycan chain. The chain is Endo-type membrane-bound lytic murein transglycosylase A from Shigella dysenteriae serotype 1 (strain Sd197).